The chain runs to 175 residues: Orotate phosphoribosyltransferase (175 aa).

5-phospho-alpha-D-ribose 1-diphosphate-binding positions include Arg88, Lys89, Lys92, and 114–122; that span reads EDVVTTARG. The orotate site is built by Thr118 and Arg146.

It belongs to the purine/pyrimidine phosphoribosyltransferase family. PyrE subfamily. In terms of assembly, homodimer. Mg(2+) is required as a cofactor.

The catalysed reaction is orotidine 5'-phosphate + diphosphate = orotate + 5-phospho-alpha-D-ribose 1-diphosphate. It functions in the pathway pyrimidine metabolism; UMP biosynthesis via de novo pathway; UMP from orotate: step 1/2. Its function is as follows. Catalyzes the transfer of a ribosyl phosphate group from 5-phosphoribose 1-diphosphate to orotate, leading to the formation of orotidine monophosphate (OMP). The sequence is that of Orotate phosphoribosyltransferase from Methanocella arvoryzae (strain DSM 22066 / NBRC 105507 / MRE50).